The chain runs to 226 residues: 2,3-bisphosphoglycerate-dependent phosphoglycerate mutase (226 aa).

Residues 8-15, 21-22, Arg-58, 109-112, Lys-120, 136-137, and 180-181 contribute to the substrate site; these read RHGQSVWN, TG, ERMY, RR, and GN. His-9 functions as the Tele-phosphohistidine intermediate in the catalytic mechanism. Catalysis depends on Glu-109, which acts as the Proton donor/acceptor.

Belongs to the phosphoglycerate mutase family. BPG-dependent PGAM subfamily.

The catalysed reaction is (2R)-2-phosphoglycerate = (2R)-3-phosphoglycerate. The protein operates within carbohydrate degradation; glycolysis; pyruvate from D-glyceraldehyde 3-phosphate: step 3/5. Its function is as follows. Catalyzes the interconversion of 2-phosphoglycerate and 3-phosphoglycerate. The protein is 2,3-bisphosphoglycerate-dependent phosphoglycerate mutase of Chlamydia trachomatis serovar L2b (strain UCH-1/proctitis).